The chain runs to 1059 residues: Kinesin-like protein KIN-7K, chloroplastic (1059 aa).

Low complexity-rich tracts occupy residues 1–35 and 43–58; these read MSSRPSSSASSRRSSSPFSAGSRRPPTSSSSSAGS and PRSYSTASSVSSSSHF. The transit peptide at 1-48 directs the protein to the chloroplast; that stretch reads MSSRPSSSASSRRSSSPFSAGSRRPPTSSSSSAGSYLTGRLMPRSYST. The interval 1–99 is disordered; it reads MSSRPSSSAS…SPPSPVPFPS (99 aa). The segment covering 59-69 has biased composition (gly residues); the sequence is FGGGGGSGGGS. The segment covering 70–87 has biased composition (low complexity); the sequence is RSTTPGRRGSSSSSLVGP. The segment covering 88 to 97 has biased composition (pro residues); sequence VPSPPSPVPF. One can recognise a Kinesin motor domain in the interval 114–431; the sequence is SISVTIRFRP…LKFASRAKRV (318 aa). An ATP-binding site is contributed by 194-201; the sequence is GVTSSGKT. A coiled-coil region spans residues 435–518; the sequence is AARNRMIDEK…IQRLTKLILV (84 aa). Residues 526–570 form a disordered region; sequence ALTDTSSHQRHNSVNEEDKVSTSQDSSMLVQNDSATKDSLSSASP. The span at 546–569 shows a compositional bias: polar residues; sequence STSQDSSMLVQNDSATKDSLSSAS. 3 coiled-coil regions span residues 640 to 674, 700 to 781, and 862 to 910; these read EGTKNQIDNLEREIREKRRHMRALEQKLMESGEAS, ELEL…EENR, and LEDM…LEND. The segment at 1013–1048 adopts an RING-type zinc-finger fold; that stretch reads CKVCFESATAAVLLPCRHFCLCKPCSLACSECPLCR.

The protein belongs to the TRAFAC class myosin-kinesin ATPase superfamily. Kinesin family. KIN-7 subfamily.

The protein localises to the plastid. Its subcellular location is the chloroplast. This is Kinesin-like protein KIN-7K, chloroplastic from Oryza sativa subsp. japonica (Rice).